The chain runs to 134 residues: Profilin-4 (134 aa).

Cysteine 13 and cysteine 118 are disulfide-bonded. The short motif at 84 to 100 (AVIRGKKGSGGITIKKT) is the Involved in PIP2 interaction element. Threonine 114 bears the Phosphothreonine mark.

The protein belongs to the profilin family. In terms of assembly, occurs in many kinds of cells as a complex with monomeric actin in a 1:1 ratio. Phosphorylated by MAP kinases.

It is found in the cytoplasm. Its subcellular location is the cytoskeleton. Binds to actin and affects the structure of the cytoskeleton. At high concentrations, profilin prevents the polymerization of actin, whereas it enhances it at low concentrations. The chain is Profilin-4 from Olea europaea (Common olive).